The chain runs to 379 residues: MSKLALLVLEDGTVFRGVSIGADGVSVGEVVFNTSMTGYQEILTDPSYSQQIVTLTYPHIGNTGTNSEDEESSSIHAQGLVIRDLPLIASNFRNEQSLSDYLKSQNIVGIADIDTRKLTRILREKGAQNGCIVAGNNLDEALALAKAKEFPGLKGMDLAKEVTTKEAYQWKQGSWTLESGLPEAKDDSELPYHVVAYDFGAKRNILRMLVDRGCRLTVVPAETSAEEVLALNPDGVFLSNGPGDPEPCTYAIEATKVFLEKGLPIFGICLGHQILALASGAQTVKMKFGHHGANHPVKDLERNVVMITSQNHGFAADEATLPENLRATHVSLFDGSLQGIHRTDKPAFSFQGHPEASPGPHDAAPLFDHFIELIKKHSA.

Residues 1–189 (MSKLALLVLE…GLPEAKDDSE (189 aa)) form a CPSase region. L-glutamine contacts are provided by Ser-47, Gly-241, and Gly-243. Residues 193–379 (HVVAYDFGAK…FIELIKKHSA (187 aa)) form the Glutamine amidotransferase type-1 domain. Residue Cys-269 is the Nucleophile of the active site. Positions 270, 273, 311, 313, and 314 each coordinate L-glutamine. Residues His-353 and Glu-355 contribute to the active site.

The protein belongs to the CarA family. As to quaternary structure, composed of two chains; the small (or glutamine) chain promotes the hydrolysis of glutamine to ammonia, which is used by the large (or ammonia) chain to synthesize carbamoyl phosphate. Tetramer of heterodimers (alpha,beta)4.

The catalysed reaction is hydrogencarbonate + L-glutamine + 2 ATP + H2O = carbamoyl phosphate + L-glutamate + 2 ADP + phosphate + 2 H(+). It catalyses the reaction L-glutamine + H2O = L-glutamate + NH4(+). The protein operates within amino-acid biosynthesis; L-arginine biosynthesis; carbamoyl phosphate from bicarbonate: step 1/1. It functions in the pathway pyrimidine metabolism; UMP biosynthesis via de novo pathway; (S)-dihydroorotate from bicarbonate: step 1/3. Functionally, small subunit of the glutamine-dependent carbamoyl phosphate synthetase (CPSase). CPSase catalyzes the formation of carbamoyl phosphate from the ammonia moiety of glutamine, carbonate, and phosphate donated by ATP, constituting the first step of 2 biosynthetic pathways, one leading to arginine and/or urea and the other to pyrimidine nucleotides. The small subunit (glutamine amidotransferase) binds and cleaves glutamine to supply the large subunit with the substrate ammonia. This Vibrio parahaemolyticus serotype O3:K6 (strain RIMD 2210633) protein is Carbamoyl phosphate synthase small chain.